An 888-amino-acid chain; its full sequence is DNA mismatch repair protein MutS (888 aa).

Residues 249–271 are disordered; that stretch reads IGQRPPLSPPSREASGSTMAIDP. 638–645 serves as a coordination point for ATP; that stretch reads GPNMAGKS.

This sequence belongs to the DNA mismatch repair MutS family.

In terms of biological role, this protein is involved in the repair of mismatches in DNA. It is possible that it carries out the mismatch recognition step. This protein has a weak ATPase activity. In Nitrobacter winogradskyi (strain ATCC 25391 / DSM 10237 / CIP 104748 / NCIMB 11846 / Nb-255), this protein is DNA mismatch repair protein MutS.